We begin with the raw amino-acid sequence, 77 residues long: Surfactant-associated protein 2 (77 aa).

The N-terminal stretch at 1–19 (MESLMRLFLLLALLSSSHA) is a signal peptide. N-linked (GlcNAc...) asparagine glycosylation occurs at Asn61.

Post-translationally, N-glycosylated. In terms of tissue distribution, expressed in lung, and specifically in alveolar type II epithelial cells.

It is found in the secreted. Its subcellular location is the cytoplasmic vesicle. It localises to the secretory vesicle. The protein resides in the golgi apparatus. Functionally, putative surfactant protein. The protein is Surfactant-associated protein 2 of Mus musculus (Mouse).